Consider the following 373-residue polypeptide: MTSRYPSFAAEILDLFAEREAVLTDIAIIQPADPFLDMAGEDLRRRIFLTESETGETLCLRPEFTIPVCLDHIEKRASTPRRYAYLGEVFRQHREGSPEFFQAGVEDLGAKDRPAADARSLADARAILSCVLPNTGFHVTLGDQAVFEAVLSALGLPRGWQKRLARAFGSPAMLEAAIAEFTSPQGTANLPREVASLVAQGNEQRLTHHIEEAMQAAGHSPTAGREPDEIARRLLEKAALRSVRLSDAALNALKSFLAIKVPLEQAGERLTAFADEAGIFLDEALADFSARAERIGDHALPLDEIRYDAGFGRPLDYYTGFIFEIGVEGLRQPLVGGGRYDRLLTLLGAEEPIPGVGFSMWLDRIATVRGEKP.

This sequence belongs to the class-II aminoacyl-tRNA synthetase family. HisZ subfamily. In terms of assembly, heteromultimer composed of HisG and HisZ subunits.

The protein resides in the cytoplasm. It functions in the pathway amino-acid biosynthesis; L-histidine biosynthesis; L-histidine from 5-phospho-alpha-D-ribose 1-diphosphate: step 1/9. In terms of biological role, required for the first step of histidine biosynthesis. May allow the feedback regulation of ATP phosphoribosyltransferase activity by histidine. This is ATP phosphoribosyltransferase regulatory subunit from Chelativorans sp. (strain BNC1).